The sequence spans 313 residues: Malate dehydrogenase (313 aa).

Residues 11 to 16 and D35 contribute to the NAD(+) site; that span reads GSGNIG. Substrate-binding residues include R84 and R90. NAD(+) is bound by residues N97 and 120 to 122; that span reads VTN. Positions 122 and 153 each coordinate substrate. The active-site Proton acceptor is the H177.

Belongs to the LDH/MDH superfamily. MDH type 3 family.

The catalysed reaction is (S)-malate + NAD(+) = oxaloacetate + NADH + H(+). Its function is as follows. Catalyzes the reversible oxidation of malate to oxaloacetate. This Ehrlichia ruminantium (strain Welgevonden) protein is Malate dehydrogenase.